Reading from the N-terminus, the 200-residue chain is Sorting nexin-10 (200 aa).

Residues 8 to 125 (EEFVSVWVRD…SLHLFLQSHL (118 aa)) form a required for interaction with ATP6V1D region. In terms of domain architecture, PX spans 10–127 (FVSVWVRDPR…HLFLQSHLNS (118 aa)). Arg-53, Lys-79, and Arg-94 together coordinate a 1,2-diacyl-sn-glycero-3-phospho-(1D-myo-inositol-3-phosphate). Over residues 156 to 167 (FPEEEEGKKEND) the composition is skewed to basic and acidic residues. The interval 156–200 (FPEEEEGKKENDIDYDSESSSSGFGHSSDDSSSHGCKMSTAPQES) is disordered.

The protein belongs to the sorting nexin family. In terms of assembly, interacts with ATP6V1D; may play a role in ciliogenesis.

Its subcellular location is the cytoplasm. It localises to the endosome membrane. The protein resides in the cytoskeleton. The protein localises to the microtubule organizing center. It is found in the centrosome. In terms of biological role, probable phosphoinositide-binding protein involved in protein sorting and membrane trafficking in endosomes. Plays a role in cilium biogenesis through regulation of the transport and the localization of proteins to the cilium. Required for the localization to the cilium of V-ATPase subunit ATP6V1D and ATP6V0D1, and RAB8A. Involved in osteoclast differentiation and therefore bone resorption. This Bos taurus (Bovine) protein is Sorting nexin-10 (SNX10).